The primary structure comprises 428 residues: Mitochondrial distribution and morphology protein 12 (428 aa).

Residues 1–387 enclose the SMP-LTD domain; it reads MSFDINWNQL…WPSWICIDMN (387 aa). Disordered regions lie at residues 75–168 and 387–428; these read VMNE…APPL and NDDD…EAGE. Over residues 81 to 96 the composition is skewed to basic and acidic residues; the sequence is NDSKDEHLKNHGDGIN. A compositionally biased stretch (acidic residues) spans 106 to 133; the sequence is LDDEDEDDEDDDEDDEDEEEEDEDDYDD. Residues 146–161 show a composition bias toward polar residues; that stretch reads LNFNENSTTPSANSFA. Over residues 387 to 403 the composition is skewed to acidic residues; it reads NDDDDEEEEEEESEDND. Basic and acidic residues predominate over residues 412 to 428; it reads NDGKHGDGRTDETEAGE.

It belongs to the MDM12 family. In terms of assembly, component of the ER-mitochondria encounter structure (ERMES) or MDM complex, composed of MMM1, MDM10, MDM12 and MDM34. An MMM1 homodimer associates with one molecule of MDM12 on each side in a pairwise head-to-tail manner, and the SMP-LTD domains of MMM1 and MDM12 generate a continuous hydrophobic tunnel for phospholipid trafficking.

It localises to the mitochondrion outer membrane. Its subcellular location is the endoplasmic reticulum membrane. Its function is as follows. Component of the ERMES/MDM complex, which serves as a molecular tether to connect the endoplasmic reticulum (ER) and mitochondria. Components of this complex are involved in the control of mitochondrial shape and protein biogenesis, and function in nonvesicular lipid trafficking between the ER and mitochondria. MDM12 is required for the interaction of the ER-resident membrane protein MMM1 and the outer mitochondrial membrane-resident beta-barrel protein MDM10. The MDM12-MMM1 subcomplex functions in the major beta-barrel assembly pathway that is responsible for biogenesis of all mitochondrial outer membrane beta-barrel proteins, and acts in a late step after the SAM complex. The MDM10-MDM12-MMM1 subcomplex further acts in the TOM40-specific pathway after the action of the MDM12-MMM1 complex. Essential for establishing and maintaining the structure of mitochondria and maintenance of mtDNA nucleoids. The polypeptide is Mitochondrial distribution and morphology protein 12 (Candida albicans (strain SC5314 / ATCC MYA-2876) (Yeast)).